The primary structure comprises 549 residues: Glutamyl-tRNA(Gln) amidotransferase subunit B, mitochondrial (549 aa).

Residues 1–23 constitute a mitochondrion transit peptide; the sequence is MLRISRDTKIVARVTHVTKSRTY.

This sequence belongs to the GatB/GatE family. GatB subfamily. Subunit of the heterotrimeric GatFAB amidotransferase (AdT) complex, composed of A, B and F subunits.

Its subcellular location is the mitochondrion. The enzyme catalyses L-glutamyl-tRNA(Gln) + L-glutamine + ATP + H2O = L-glutaminyl-tRNA(Gln) + L-glutamate + ADP + phosphate + H(+). Allows the formation of correctly charged Gln-tRNA(Gln) through the transamidation of misacylated Glu-tRNA(Gln) in the mitochondria. The reaction takes place in the presence of glutamine and ATP through an activated gamma-phospho-Glu-tRNA(Gln). The protein is Glutamyl-tRNA(Gln) amidotransferase subunit B, mitochondrial of Yarrowia lipolytica (strain CLIB 122 / E 150) (Yeast).